We begin with the raw amino-acid sequence, 293 residues long: Nitrogenase iron protein (293 aa).

10–17 (GKGGIGKS) is a binding site for ATP. Cysteine 98 is a [4Fe-4S] cluster binding site. Arginine 101 is modified (ADP-ribosylarginine; by dinitrogenase reductase ADP-ribosyltransferase). Cysteine 133 is a binding site for [4Fe-4S] cluster.

Belongs to the NifH/BchL/ChlL family. In terms of assembly, homodimer. It depends on [4Fe-4S] cluster as a cofactor. In terms of processing, the reversible ADP-ribosylation of Arg-101 inactivates the nitrogenase reductase and regulates nitrogenase activity.

The catalysed reaction is N2 + 8 reduced [2Fe-2S]-[ferredoxin] + 16 ATP + 16 H2O = H2 + 8 oxidized [2Fe-2S]-[ferredoxin] + 2 NH4(+) + 16 ADP + 16 phosphate + 6 H(+). In terms of biological role, the key enzymatic reactions in nitrogen fixation are catalyzed by the nitrogenase complex, which has 2 components: the iron protein and the molybdenum-iron protein. This Stutzerimonas stutzeri (strain A1501) (Pseudomonas stutzeri) protein is Nitrogenase iron protein.